The following is a 222-amino-acid chain: Adenylate kinase (222 aa).

Ser2 is a propeptide (removed in mature form). Residues Ser2 and Ser3 each carry the N-acetylserine modification. 16 to 21 (GAGKGT) is a binding site for ATP. Residues 36–65 (ATGDMLRSQIAKGTQLGLEAKKIMDQGGLV) form an NMP region. AMP contacts are provided by residues Thr37, Arg42, 63 to 65 (GLV), 92 to 95 (GFPR), and Gln99. An LID region spans residues 133–170 (GRLIHPASGRSYHKIFNPPKEDMKDDVTGEALVQRSDD). ATP is bound by residues Arg134 and 143–144 (SY). Residues Arg167 and Arg178 each coordinate AMP. Gln206 lines the ATP pocket.

Belongs to the adenylate kinase family. AK2 subfamily. As to quaternary structure, monomer.

The protein localises to the cytoplasm. It is found in the cytosol. It localises to the mitochondrion intermembrane space. It catalyses the reaction AMP + ATP = 2 ADP. Catalyzes the reversible transfer of the terminal phosphate group between ATP and AMP. Plays an important role in cellular energy homeostasis and in adenine nucleotide metabolism. Adenylate kinase activity is critical for regulation of the phosphate utilization and the AMP de novo biosynthesis pathways. The protein is Adenylate kinase of Saccharomyces cerevisiae (strain RM11-1a) (Baker's yeast).